We begin with the raw amino-acid sequence, 95 residues long: Phospholipase A2 inhibitor gammaCdcPLI (95 aa).

4 disulfide bridges follow: cysteine 2/cysteine 26, cysteine 5/cysteine 12, cysteine 19/cysteine 30, and cysteine 61/cysteine 77.

As to quaternary structure, forms dimers or higher order oligomers in a temperature-dependent manner in vitro. As to expression, expressed by the liver.

The protein resides in the secreted. In terms of biological role, inhibits the enzymatic activity of basic and acidic PLA2 from B.jararacussu and B.pauloensis, respectively, in a dose-dependent manner. Also inhibits myotoxicity and cytotoxicity of BnSp-7 of B.pauloensis. This is Phospholipase A2 inhibitor gammaCdcPLI from Crotalus durissus collilineatus (Brazilian rattlesnake).